Here is a 586-residue protein sequence, read N- to C-terminus: Maltogenic alpha-amylase (586 aa).

Residues Asn-147, Asn-152, Asp-153, Gly-172, and Asp-174 each contribute to the Ca(2+) site. His-247 and Arg-326 together coordinate substrate. The active-site Nucleophile is Asp-328. Catalysis depends on Glu-357, which acts as the Proton donor. Residues 423 to 424, Asp-468, and Arg-472 contribute to the substrate site; that span reads HD.

This sequence belongs to the glycosyl hydrolase 13 family. It depends on Ca(2+) as a cofactor.

It carries out the reaction hydrolysis of (1-&gt;4)-alpha-D-glucosidic linkages in polysaccharides so as to remove successive alpha-maltose residues from the non-reducing ends of the chains.. In terms of biological role, converts starch into maltose. This chain is Maltogenic alpha-amylase, found in Bacillus acidopullulyticus.